The following is a 379-amino-acid chain: Sporozoite surface protein P36 (379 aa).

Positions 1–33 (MAYNIWEEYIMANFHNVYPVVTNLFLFIALSYS) are cleaved as a signal peptide. 2 consecutive 6-Cys domains span residues 69 to 206 (FVFF…VKAN) and 215 to 379 (FIKG…TVES). 3 cysteine pairs are disulfide-bonded: C91/C101, C115/C186, and C129/C184. N98 and N118 each carry an N-linked (GlcNAc...) asparagine glycan. N206 carries an N-linked (GlcNAc...) asparagine glycan. Disulfide bonds link C219/C243, C257/C360, and C295/C358. N-linked (GlcNAc...) asparagine glycosylation is found at N298 and N374.

It is found in the cell surface. It localises to the cell membrane. Involved in sporozoite infection of hepatocytes and replication therein. In Plasmodium falciparum (isolate 3D7), this protein is Sporozoite surface protein P36 (PF36).